The primary structure comprises 766 residues: Subtilisin-like protease SBT3.13 (766 aa).

The first 21 residues, 1 to 21 (MNNSLQSSKLVLLLAIALVLF), serve as a signal peptide directing secretion. Residues 22–120 (LNTELDFLTA…VIPNRIRKLK (99 aa)) constitute a propeptide, activation peptide. An Inhibitor I9 domain is found at 41–119 (VYIVYLGERE…HVIPNRIRKL (79 aa)). The Peptidase S8 domain maps to 134–618 (PTSFSSLSSV…GGLVNPEKAA (485 aa)). Aspartate 162 acts as the Charge relay system in catalysis. 2 N-linked (GlcNAc...) asparagine glycosylation sites follow: asparagine 195 and asparagine 223. The active-site Charge relay system is histidine 239. N-linked (GlcNAc...) asparagine glycosylation is found at asparagine 254 and asparagine 389. Residue serine 549 is the Charge relay system of the active site. The N-linked (GlcNAc...) asparagine glycan is linked to asparagine 641.

It belongs to the peptidase S8 family.

It is found in the secreted. The polypeptide is Subtilisin-like protease SBT3.13 (Arabidopsis thaliana (Mouse-ear cress)).